Consider the following 132-residue polypeptide: Glycine cleavage system H protein (132 aa).

In terms of domain architecture, Lipoyl-binding spans 24–106 (RVRVGITDYA…YGAGWLFELE (83 aa)). At Lys65 the chain carries N6-lipoyllysine.

The protein belongs to the GcvH family. As to quaternary structure, the glycine cleavage system is composed of four proteins: P, T, L and H. (R)-lipoate serves as cofactor.

Its function is as follows. The glycine cleavage system catalyzes the degradation of glycine. The H protein shuttles the methylamine group of glycine from the P protein to the T protein. This is Glycine cleavage system H protein from Nocardia farcinica (strain IFM 10152).